A 407-amino-acid chain; its full sequence is 12S rRNA N(4)-cytidine methyltransferase METTL15 (407 aa).

Residues 100–102 (GGH), Asp119, Phe146, Asp169, and Gln176 contribute to the S-adenosyl-L-methionine site. Ser358 carries the post-translational modification Phosphoserine.

It belongs to the methyltransferase superfamily. RsmH family.

It localises to the mitochondrion matrix. The catalysed reaction is cytidine(839) in 12S rRNA + S-adenosyl-L-methionine = N(4)-methylcytidine(839) in 12S rRNA + S-adenosyl-L-homocysteine + H(+). Its function is as follows. N4-methylcytidine (m4C) methyltransferase responsible for the methylation of position C839 in mitochondrial 12S rRNA. Involved in the stabilization of 12S rRNA folding, therefore facilitating the assembly of the mitochondrial small ribosomal subunits. The protein is 12S rRNA N(4)-cytidine methyltransferase METTL15 of Homo sapiens (Human).